A 376-amino-acid polypeptide reads, in one-letter code: Chaperone protein DnaJ (376 aa).

Positions 5–70 (DYYEVLGVAR…NKRRAYDAHG (66 aa)) constitute a J domain. The CR-type zinc-finger motif lies at 132 to 209 (GIERRIEIPT…CHGAGRVEEN (78 aa)). 8 residues coordinate Zn(2+): cysteine 145, cysteine 148, cysteine 161, cysteine 164, cysteine 183, cysteine 186, cysteine 197, and cysteine 200. CXXCXGXG motif repeat units lie at residues 145–152 (CVSCHGSG), 161–168 (CGTCHGRG), 183–190 (CPHCDGRG), and 197–204 (CKTCHGAG).

It belongs to the DnaJ family. As to quaternary structure, homodimer. The cofactor is Zn(2+).

It localises to the cytoplasm. Participates actively in the response to hyperosmotic and heat shock by preventing the aggregation of stress-denatured proteins and by disaggregating proteins, also in an autonomous, DnaK-independent fashion. Unfolded proteins bind initially to DnaJ; upon interaction with the DnaJ-bound protein, DnaK hydrolyzes its bound ATP, resulting in the formation of a stable complex. GrpE releases ADP from DnaK; ATP binding to DnaK triggers the release of the substrate protein, thus completing the reaction cycle. Several rounds of ATP-dependent interactions between DnaJ, DnaK and GrpE are required for fully efficient folding. Also involved, together with DnaK and GrpE, in the DNA replication of plasmids through activation of initiation proteins. The chain is Chaperone protein DnaJ from Xanthomonas oryzae pv. oryzae (strain PXO99A).